Here is a 421-residue protein sequence, read N- to C-terminus: Tol-Pal system protein TolA (421 aa).

Residues Met1 to Arg13 lie on the Cytoplasmic side of the membrane. A helical transmembrane segment spans residues Ala14–Phe34. The Periplasmic portion of the chain corresponds to Asp35–Pro421. Positions Ser48–Thr310 are domain II (alpha-helical). The disordered stretch occupies residues Lys65 to Ala266. 2 stretches are compositionally biased toward basic and acidic residues: residues Ser73–Ala175 and Glu206–Ala266. 13 consecutive repeat copies span residues Glu224–Ala229, Glu230–Ala234, Asp235–Ala240, Glu241–Ala245, Asp246–Ala250, Glu251–Ala255, Glu256–Ala260, Asp261–Ala266, Glu267–Ala271, Asp272–Ala277, Ala278–Ala282, Glu283–Ala287, and Ala288–Ala292. Residues Glu224–Ala292 form a 13 X tandem repeats of [EDA]-K(1,2)-A(2,4) region. Residues Glu300 to Asp336 are disordered. A domain III (functional) region spans residues Gly311–Pro421. The segment covering Asn317–Ala332 has biased composition (polar residues). An intrachain disulfide couples Cys363 to Cys388.

This sequence belongs to the TolA family. In terms of assembly, the Tol-Pal system is composed of five core proteins: the inner membrane proteins TolA, TolQ and TolR, the periplasmic protein TolB and the outer membrane protein Pal. They form a network linking the inner and outer membranes and the peptidoglycan layer. TolA interacts with TolQ and TolR via its N-terminal domain. Interacts with CpoB, and with the trimeric porins OmpC, OmpF, PhoE and LamB via its central domain. Interacts with TolB via its C-terminal domain. Also interacts with Pal via its C-terminal domain. This interaction is proton motive force dependent and requires TolQ and TolR.

The protein resides in the cell inner membrane. Functionally, part of the Tol-Pal system, which plays a role in outer membrane invagination during cell division and is important for maintaining outer membrane integrity. The Tol-Pal system is also required for polar localization of chemoreceptors clusters. The system also appears to be required for the activity of several outer membrane-localized enzymes with cell wall remodeling activity. Is involved in the uptake of group A colicins (colicins A, E1, E2, E3, and K) and in the uptake of filamentous phage DNA. The chain is Tol-Pal system protein TolA from Escherichia coli (strain K12).